The primary structure comprises 300 residues: Protein XRI1 (300 aa).

Interacts (via C-terminal domain) with MIP1.

It localises to the nucleus. Required for mitotic division of the generative cell nucleus and the development of mature tricellular pollen grains, and for male and female meiosis. The chain is Protein XRI1 (XRI1) from Arabidopsis thaliana (Mouse-ear cress).